An 83-amino-acid polypeptide reads, in one-letter code: UPF0297 protein LCK_00468 (83 aa).

The protein belongs to the UPF0297 family.

The polypeptide is UPF0297 protein LCK_00468 (Leuconostoc citreum (strain KM20)).